The chain runs to 900 residues: DNA mismatch repair protein MutS (900 aa).

An ATP-binding site is contributed by 637-644; sequence GPNMAGKS.

This sequence belongs to the DNA mismatch repair MutS family.

In terms of biological role, this protein is involved in the repair of mismatches in DNA. It is possible that it carries out the mismatch recognition step. This protein has a weak ATPase activity. The sequence is that of DNA mismatch repair protein MutS from Methanosarcina mazei (strain ATCC BAA-159 / DSM 3647 / Goe1 / Go1 / JCM 11833 / OCM 88) (Methanosarcina frisia).